The following is a 274-amino-acid chain: Triosephosphate isomerase (274 aa).

13-15 (NWK) provides a ligand contact to substrate. His98 functions as the Electrophile in the catalytic mechanism. The active-site Proton acceptor is Glu170. Positions 176 and 216 each coordinate substrate.

It belongs to the triosephosphate isomerase family. Homodimer.

It is found in the cytoplasm. It catalyses the reaction D-glyceraldehyde 3-phosphate = dihydroxyacetone phosphate. The protein operates within carbohydrate biosynthesis; gluconeogenesis. Its pathway is carbohydrate degradation; glycolysis; D-glyceraldehyde 3-phosphate from glycerone phosphate: step 1/1. Functionally, involved in the gluconeogenesis. Catalyzes stereospecifically the conversion of dihydroxyacetone phosphate (DHAP) to D-glyceraldehyde-3-phosphate (G3P). This chain is Triosephosphate isomerase, found in Onion yellows phytoplasma (strain OY-M).